The sequence spans 128 residues: Fluoride-specific ion channel FluC (128 aa).

4 helical membrane-spanning segments follow: residues 4–24 (LLLALIVGLGGFLGASLRYLI), 39–59 (GTLIANILGALLIGFIMEFSM), 71–91 (FLTTGIMGGLTTFSTFSYETI), and 99–119 (MTLGIENIILNLGCSLLFVVI). Residues G78 and T81 each coordinate Na(+).

This sequence belongs to the fluoride channel Fluc/FEX (TC 1.A.43) family.

Its subcellular location is the cell membrane. It catalyses the reaction fluoride(in) = fluoride(out). Its activity is regulated as follows. Na(+) is not transported, but it plays an essential structural role and its presence is essential for fluoride channel function. Fluoride-specific ion channel. Important for reducing fluoride concentration in the cell, thus reducing its toxicity. The protein is Fluoride-specific ion channel FluC of Clostridium perfringens (strain 13 / Type A).